We begin with the raw amino-acid sequence, 124 residues long: Small ribosomal subunit protein uS12 (124 aa).

Residue D89 is modified to 3-methylthioaspartic acid.

Belongs to the universal ribosomal protein uS12 family. In terms of assembly, part of the 30S ribosomal subunit. Contacts proteins S8 and S17. May interact with IF1 in the 30S initiation complex.

Its function is as follows. With S4 and S5 plays an important role in translational accuracy. Interacts with and stabilizes bases of the 16S rRNA that are involved in tRNA selection in the A site and with the mRNA backbone. Located at the interface of the 30S and 50S subunits, it traverses the body of the 30S subunit contacting proteins on the other side and probably holding the rRNA structure together. The combined cluster of proteins S8, S12 and S17 appears to hold together the shoulder and platform of the 30S subunit. The chain is Small ribosomal subunit protein uS12 from Acinetobacter baumannii (strain AB307-0294).